A 115-amino-acid polypeptide reads, in one-letter code: NAD(P)H-quinone oxidoreductase subunit M (115 aa).

Belongs to the complex I NdhM subunit family. As to quaternary structure, NDH-1 can be composed of about 15 different subunits; different subcomplexes with different compositions have been identified which probably have different functions.

It is found in the cellular thylakoid membrane. It catalyses the reaction a plastoquinone + NADH + (n+1) H(+)(in) = a plastoquinol + NAD(+) + n H(+)(out). The enzyme catalyses a plastoquinone + NADPH + (n+1) H(+)(in) = a plastoquinol + NADP(+) + n H(+)(out). Its function is as follows. NDH-1 shuttles electrons from an unknown electron donor, via FMN and iron-sulfur (Fe-S) centers, to quinones in the respiratory and/or the photosynthetic chain. The immediate electron acceptor for the enzyme in this species is believed to be plastoquinone. Couples the redox reaction to proton translocation, and thus conserves the redox energy in a proton gradient. Cyanobacterial NDH-1 also plays a role in inorganic carbon-concentration. The protein is NAD(P)H-quinone oxidoreductase subunit M of Synechococcus sp. (strain CC9605).